Here is a 603-residue protein sequence, read N- to C-terminus: UvrABC system protein C (603 aa).

Residues 15–92 form the GIY-YIG domain; that stretch reads DQPGCYLMKD…IKKHDPRFNI (78 aa). Residues 197–232 form the UVR domain; the sequence is KTVKNDLMKKMQEAAENMEFEKAGEFRDQINAIETT.

The protein belongs to the UvrC family. As to quaternary structure, interacts with UvrB in an incision complex.

Its subcellular location is the cytoplasm. Its function is as follows. The UvrABC repair system catalyzes the recognition and processing of DNA lesions. UvrC both incises the 5' and 3' sides of the lesion. The N-terminal half is responsible for the 3' incision and the C-terminal half is responsible for the 5' incision. The chain is UvrABC system protein C from Listeria monocytogenes serovar 1/2a (strain ATCC BAA-679 / EGD-e).